The primary structure comprises 288 residues: Tryptophan 2,3-dioxygenase (288 aa).

Substrate contacts are provided by residues 57–61, Y119, and R123; that span reads FIIQH. Heme is bound at residue H246. Residue T260 coordinates substrate.

This sequence belongs to the tryptophan 2,3-dioxygenase family. As to quaternary structure, homotetramer. Heme serves as cofactor.

It catalyses the reaction L-tryptophan + O2 = N-formyl-L-kynurenine. It participates in amino-acid degradation; L-tryptophan degradation via kynurenine pathway; L-kynurenine from L-tryptophan: step 1/2. Functionally, heme-dependent dioxygenase that catalyzes the oxidative cleavage of the L-tryptophan (L-Trp) pyrrole ring and converts L-tryptophan to N-formyl-L-kynurenine. Catalyzes the oxidative cleavage of the indole moiety. The sequence is that of Tryptophan 2,3-dioxygenase from Pseudomonas aeruginosa (strain ATCC 15692 / DSM 22644 / CIP 104116 / JCM 14847 / LMG 12228 / 1C / PRS 101 / PAO1).